A 185-amino-acid chain; its full sequence is Ribosome-recycling factor (185 aa).

The disordered stretch occupies residues 138-159 (KVKKLEKDKEISEDESKKAQEQ).

The protein belongs to the RRF family.

It localises to the cytoplasm. Functionally, responsible for the release of ribosomes from messenger RNA at the termination of protein biosynthesis. May increase the efficiency of translation by recycling ribosomes from one round of translation to another. This chain is Ribosome-recycling factor, found in Helicobacter acinonychis (strain Sheeba).